The chain runs to 507 residues: ATP synthase subunit alpha, chloroplastic (507 aa).

ATP is bound at residue 170–177 (GDRQTGKT).

It belongs to the ATPase alpha/beta chains family. As to quaternary structure, F-type ATPases have 2 components, CF(1) - the catalytic core - and CF(0) - the membrane proton channel. CF(1) has five subunits: alpha(3), beta(3), gamma(1), delta(1), epsilon(1). CF(0) has four main subunits: a, b, b' and c.

It localises to the plastid. Its subcellular location is the chloroplast thylakoid membrane. The enzyme catalyses ATP + H2O + 4 H(+)(in) = ADP + phosphate + 5 H(+)(out). In terms of biological role, produces ATP from ADP in the presence of a proton gradient across the membrane. The alpha chain is a regulatory subunit. The chain is ATP synthase subunit alpha, chloroplastic from Acorus calamus var. americanus (American sweet flag).